A 363-amino-acid chain; its full sequence is Chorismate synthase (363 aa).

Residues 44–63 are disordered; that stretch reads DLDRRKPGTSRHTTQRQEPD. NADP(+) contacts are provided by R48 and R54. FMN contacts are provided by residues 125-127, 237-238, G277, 292-296, and R318; these read RSS, NA, and KPTSS.

The protein belongs to the chorismate synthase family. In terms of assembly, homotetramer. FMNH2 is required as a cofactor.

It carries out the reaction 5-O-(1-carboxyvinyl)-3-phosphoshikimate = chorismate + phosphate. The protein operates within metabolic intermediate biosynthesis; chorismate biosynthesis; chorismate from D-erythrose 4-phosphate and phosphoenolpyruvate: step 7/7. Its function is as follows. Catalyzes the anti-1,4-elimination of the C-3 phosphate and the C-6 proR hydrogen from 5-enolpyruvylshikimate-3-phosphate (EPSP) to yield chorismate, which is the branch point compound that serves as the starting substrate for the three terminal pathways of aromatic amino acid biosynthesis. This reaction introduces a second double bond into the aromatic ring system. The protein is Chorismate synthase of Pseudomonas fluorescens (strain ATCC BAA-477 / NRRL B-23932 / Pf-5).